The following is a 341-amino-acid chain: UDP-3-O-acylglucosamine N-acyltransferase (341 aa).

The active-site Proton acceptor is histidine 239.

Belongs to the transferase hexapeptide repeat family. LpxD subfamily. As to quaternary structure, homotrimer.

The catalysed reaction is a UDP-3-O-[(3R)-3-hydroxyacyl]-alpha-D-glucosamine + a (3R)-hydroxyacyl-[ACP] = a UDP-2-N,3-O-bis[(3R)-3-hydroxyacyl]-alpha-D-glucosamine + holo-[ACP] + H(+). Its pathway is bacterial outer membrane biogenesis; LPS lipid A biosynthesis. In terms of biological role, catalyzes the N-acylation of UDP-3-O-acylglucosamine using 3-hydroxyacyl-ACP as the acyl donor. Is involved in the biosynthesis of lipid A, a phosphorylated glycolipid that anchors the lipopolysaccharide to the outer membrane of the cell. The protein is UDP-3-O-acylglucosamine N-acyltransferase of Idiomarina loihiensis (strain ATCC BAA-735 / DSM 15497 / L2-TR).